Here is a 280-residue protein sequence, read N- to C-terminus: Chaperone for lacto-N-biosidase (280 aa).

An N-terminal signal peptide occupies residues 1 to 37 (MPRRHRFAAAIAAVAVAAVLLVTLTVAVVTHGDGAFA).

In terms of assembly, homodimer.

The protein resides in the secreted. In terms of biological role, chaperone required for active expression of the lacto-N-biosidase LnbX. The chain is Chaperone for lacto-N-biosidase from Bifidobacterium longum subsp. longum (strain ATCC 15707 / DSM 20219 / JCM 1217 / NCTC 11818 / E194b).